The primary structure comprises 182 residues: Large ribosomal subunit protein uL5 (182 aa).

Belongs to the universal ribosomal protein uL5 family. In terms of assembly, part of the 50S ribosomal subunit; part of the 5S rRNA/L5/L18/L25 subcomplex. Contacts the 5S rRNA and the P site tRNA. Forms a bridge to the 30S subunit in the 70S ribosome.

Functionally, this is one of the proteins that bind and probably mediate the attachment of the 5S RNA into the large ribosomal subunit, where it forms part of the central protuberance. In the 70S ribosome it contacts protein S13 of the 30S subunit (bridge B1b), connecting the 2 subunits; this bridge is implicated in subunit movement. Contacts the P site tRNA; the 5S rRNA and some of its associated proteins might help stabilize positioning of ribosome-bound tRNAs. The chain is Large ribosomal subunit protein uL5 from Thermosipho melanesiensis (strain DSM 12029 / CIP 104789 / BI429).